Consider the following 285-residue polypeptide: Iron uptake system component EfeM (285 aa).

An N-terminal signal peptide occupies residues 1-34 (MTYPLLTRKTLMKKTPLALLLTLGLLQTPLAAFA).

This sequence belongs to the EfeM/EfeO family. Component of the iron transporter efeUOB/M complex composed of EfeU, EfeM and EfeB.

Its subcellular location is the periplasm. Functionally, part of the iron transporter system efeUOB/M involved in iron import. Specifically binds Fe(3+), which is produced by EfeB-mediated oxidation of Fe(2+), and delivers it to the cell inner membrane permease EfeU. Also binds Zn(2+) and Cu(2+) in vitro. In Pseudomonas syringae pv. syringae (strain B728a), this protein is Iron uptake system component EfeM.